The following is a 286-amino-acid chain: Polyamine aminopropyltransferase (286 aa).

Positions proline 5–aspartate 238 constitute a PABS domain. Glutamine 33 contributes to the S-methyl-5'-thioadenosine binding site. Histidine 64 and aspartate 88 together coordinate spermidine. S-methyl-5'-thioadenosine-binding positions include glutamate 108 and aspartate 140–glycine 141. The Proton acceptor role is filled by aspartate 158. Spermidine is bound at residue aspartate 158 to aspartate 161. Residue proline 165 coordinates S-methyl-5'-thioadenosine.

It belongs to the spermidine/spermine synthase family. In terms of assembly, homodimer or homotetramer.

The protein localises to the cytoplasm. It catalyses the reaction S-adenosyl 3-(methylsulfanyl)propylamine + putrescine = S-methyl-5'-thioadenosine + spermidine + H(+). It participates in amine and polyamine biosynthesis; spermidine biosynthesis; spermidine from putrescine: step 1/1. Its function is as follows. Catalyzes the irreversible transfer of a propylamine group from the amino donor S-adenosylmethioninamine (decarboxy-AdoMet) to putrescine (1,4-diaminobutane) to yield spermidine. The chain is Polyamine aminopropyltransferase from Klebsiella pneumoniae (strain 342).